The following is a 333-amino-acid chain: Probable siderophore transport system permease protein YfiZ (333 aa).

The first 31 residues, 1-31 (MICKKASSKWIVLVCLIFILLTAVCASVVYG), serve as a signal peptide directing secretion. The next 8 helical transmembrane spans lie at 64-84 (ALVA…MQAL), 94-114 (IFGI…FLHI), 119-139 (ALVW…YAAG), 152-172 (TLAG…LLSV), 193-213 (LDLL…CFFL), 246-266 (VMLA…GIII), 280-300 (WVLP…DIGA), and 303-323 (IIMP…MPVF).

The protein belongs to the binding-protein-dependent transport system permease family. FecCD subfamily. As to quaternary structure, the complex is composed of one ATP-binding protein (YusV), two transmembrane proteins (YfiZ and YfhA) and a solute-binding protein (YfiY).

It localises to the cell membrane. Its function is as follows. Part of the ABC transporter complex YfiYZ/YfhA/YusV involved in import of the iron-hydroxamate siderophores schizokinen, arthrobactin and corprogen. This is Probable siderophore transport system permease protein YfiZ (yfiZ) from Bacillus subtilis (strain 168).